The primary structure comprises 195 residues: ATP-dependent Clp protease proteolytic subunit (195 aa).

The active-site Nucleophile is the Ser98. His123 is an active-site residue.

This sequence belongs to the peptidase S14 family. As to quaternary structure, fourteen ClpP subunits assemble into 2 heptameric rings which stack back to back to give a disk-like structure with a central cavity, resembling the structure of eukaryotic proteasomes.

It localises to the cytoplasm. The catalysed reaction is Hydrolysis of proteins to small peptides in the presence of ATP and magnesium. alpha-casein is the usual test substrate. In the absence of ATP, only oligopeptides shorter than five residues are hydrolyzed (such as succinyl-Leu-Tyr-|-NHMec, and Leu-Tyr-Leu-|-Tyr-Trp, in which cleavage of the -Tyr-|-Leu- and -Tyr-|-Trp bonds also occurs).. In terms of biological role, cleaves peptides in various proteins in a process that requires ATP hydrolysis. Has a chymotrypsin-like activity. Plays a major role in the degradation of misfolded proteins. The protein is ATP-dependent Clp protease proteolytic subunit of Alkaliphilus oremlandii (strain OhILAs) (Clostridium oremlandii (strain OhILAs)).